The following is a 93-amino-acid chain: Aspartyl/glutamyl-tRNA(Asn/Gln) amidotransferase subunit C (93 aa).

Belongs to the GatC family. In terms of assembly, heterotrimer of A, B and C subunits.

It carries out the reaction L-glutamyl-tRNA(Gln) + L-glutamine + ATP + H2O = L-glutaminyl-tRNA(Gln) + L-glutamate + ADP + phosphate + H(+). It catalyses the reaction L-aspartyl-tRNA(Asn) + L-glutamine + ATP + H2O = L-asparaginyl-tRNA(Asn) + L-glutamate + ADP + phosphate + 2 H(+). Functionally, allows the formation of correctly charged Asn-tRNA(Asn) or Gln-tRNA(Gln) through the transamidation of misacylated Asp-tRNA(Asn) or Glu-tRNA(Gln) in organisms which lack either or both of asparaginyl-tRNA or glutaminyl-tRNA synthetases. The reaction takes place in the presence of glutamine and ATP through an activated phospho-Asp-tRNA(Asn) or phospho-Glu-tRNA(Gln). The sequence is that of Aspartyl/glutamyl-tRNA(Asn/Gln) amidotransferase subunit C from Helicobacter pylori (strain HPAG1).